The sequence spans 350 residues: Phenylalanine--tRNA ligase alpha subunit (350 aa).

A Mg(2+)-binding site is contributed by Glu-257.

Belongs to the class-II aminoacyl-tRNA synthetase family. Phe-tRNA synthetase alpha subunit type 1 subfamily. As to quaternary structure, tetramer of two alpha and two beta subunits. Mg(2+) serves as cofactor.

It is found in the cytoplasm. It carries out the reaction tRNA(Phe) + L-phenylalanine + ATP = L-phenylalanyl-tRNA(Phe) + AMP + diphosphate + H(+). This is Phenylalanine--tRNA ligase alpha subunit from Listeria monocytogenes serotype 4a (strain HCC23).